The primary structure comprises 570 residues: Peptidyl-prolyl cis-trans isomerase FKBP9 (570 aa).

The signal sequence occupies residues 1 to 24; the sequence is MALGARGWRRRSLLLLLLWVTGQA. 4 PPIase FKBP-type domains span residues 54-142, 166-254, 278-365, and 389-477; these read GDFV…VDIW, SDFV…LDLH, GDFL…IDFH, and GDYL…LELV. Residues N174, N286, N302, and N397 are each glycosylated (N-linked (GlcNAc...) asparagine). EF-hand domains follow at residues 488–523 and 533–568; these read WNGE…QVAT and NAEM…AKHD. D501, D503, N505, E507, E512, D546, N548, D550, K552, and E557 together coordinate Ca(2+). The short motif at 567–570 is the Prevents secretion from ER element; it reads HDEL.

Phosphorylated. In terms of tissue distribution, predominantly expressed in heart, skeletal muscle, lung, liver and kidney. Lower levels found in brain, spleen and testis.

It is found in the endoplasmic reticulum lumen. It carries out the reaction [protein]-peptidylproline (omega=180) = [protein]-peptidylproline (omega=0). Its activity is regulated as follows. Inhibited by FK506. Functionally, PPIases accelerate the folding of proteins during protein synthesis. This Mus musculus (Mouse) protein is Peptidyl-prolyl cis-trans isomerase FKBP9 (Fkbp9).